Consider the following 156-residue polypeptide: Small ribosomal subunit protein uS7 (156 aa).

The protein belongs to the universal ribosomal protein uS7 family. As to quaternary structure, part of the 30S ribosomal subunit. Contacts proteins S9 and S11.

One of the primary rRNA binding proteins, it binds directly to 16S rRNA where it nucleates assembly of the head domain of the 30S subunit. Is located at the subunit interface close to the decoding center, probably blocks exit of the E-site tRNA. The sequence is that of Small ribosomal subunit protein uS7 from Bacillus cereus (strain B4264).